Here is a 106-residue protein sequence, read N- to C-terminus: Chaperone modulatory protein CbpM (106 aa).

The protein belongs to the CbpM family.

In terms of biological role, interacts with CbpA and inhibits both the DnaJ-like co-chaperone activity and the DNA binding activity of CbpA. Together with CbpA, modulates the activity of the DnaK chaperone system. Does not inhibit the co-chaperone activity of DnaJ. The protein is Chaperone modulatory protein CbpM of Coxiella burnetii (strain CbuK_Q154) (Coxiella burnetii (strain Q154)).